The sequence spans 2959 residues: uncharacterized protein (2959 aa).

The protein resides in the virion. This is an uncharacterized protein from Acanthamoeba polyphaga mimivirus (APMV).